A 469-amino-acid polypeptide reads, in one-letter code: Protein DETOXIFICATION 18 (469 aa).

The next 12 helical transmembrane spans lie at 40 to 60 (LPMI…VMFA), 73 to 93 (LANS…SGAL), 121 to 141 (LVFT…FLLL), 152 to 172 (ALYM…QNIL), 183 to 203 (PLVL…YALV), 206 to 226 (AGLG…IAFV), 252 to 274 (HVVL…YWAF), 293 to 313 (LVAI…GLSA), 344 to 364 (VLAL…VGLF), 374 to 394 (FASL…QGVL), 406 to 426 (LATV…SVLC), and 438 to 458 (WIGL…MTIF).

The protein belongs to the multi antimicrobial extrusion (MATE) (TC 2.A.66.1) family.

The protein resides in the membrane. This Arabidopsis thaliana (Mouse-ear cress) protein is Protein DETOXIFICATION 18.